A 517-amino-acid chain; its full sequence is Bifunctional purine biosynthesis protein PurH (517 aa).

The 146-residue stretch at 1 to 146 folds into the MGS-like domain; the sequence is MAPIALLSVS…KNHAHVAVLT (146 aa).

The protein belongs to the PurH family.

It catalyses the reaction (6R)-10-formyltetrahydrofolate + 5-amino-1-(5-phospho-beta-D-ribosyl)imidazole-4-carboxamide = 5-formamido-1-(5-phospho-D-ribosyl)imidazole-4-carboxamide + (6S)-5,6,7,8-tetrahydrofolate. The enzyme catalyses IMP + H2O = 5-formamido-1-(5-phospho-D-ribosyl)imidazole-4-carboxamide. Its pathway is purine metabolism; IMP biosynthesis via de novo pathway; 5-formamido-1-(5-phospho-D-ribosyl)imidazole-4-carboxamide from 5-amino-1-(5-phospho-D-ribosyl)imidazole-4-carboxamide (10-formyl THF route): step 1/1. The protein operates within purine metabolism; IMP biosynthesis via de novo pathway; IMP from 5-formamido-1-(5-phospho-D-ribosyl)imidazole-4-carboxamide: step 1/1. This chain is Bifunctional purine biosynthesis protein PurH, found in Prochlorococcus marinus (strain MIT 9313).